Consider the following 448-residue polypeptide: Tubulin beta chain (448 aa).

Residues glutamine 11, glutamate 69, serine 138, glycine 142, threonine 143, glycine 144, asparagine 204, and asparagine 226 each contribute to the GTP site. Glutamate 69 lines the Mg(2+) pocket. The disordered stretch occupies residues 425 to 448 (YQDAGVDEEEEEYDEEAPVEEPLE). Acidic residues predominate over residues 429 to 448 (GVDEEEEEYDEEAPVEEPLE).

Belongs to the tubulin family. In terms of assembly, dimer of alpha and beta chains. A typical microtubule is a hollow water-filled tube with an outer diameter of 25 nm and an inner diameter of 15 nM. Alpha-beta heterodimers associate head-to-tail to form protofilaments running lengthwise along the microtubule wall with the beta-tubulin subunit facing the microtubule plus end conferring a structural polarity. Microtubules usually have 13 protofilaments but different protofilament numbers can be found in some organisms and specialized cells. It depends on Mg(2+) as a cofactor.

Its subcellular location is the cytoplasm. The protein resides in the cytoskeleton. Its function is as follows. Tubulin is the major constituent of microtubules, a cylinder consisting of laterally associated linear protofilaments composed of alpha- and beta-tubulin heterodimers. Microtubules grow by the addition of GTP-tubulin dimers to the microtubule end, where a stabilizing cap forms. Below the cap, tubulin dimers are in GDP-bound state, owing to GTPase activity of alpha-tubulin. The chain is Tubulin beta chain from Metarhizium anisopliae (Entomophthora anisopliae).